We begin with the raw amino-acid sequence, 529 residues long: NADPH-dependent thioredoxin reductase 3 (529 aa).

The transit peptide at 1 to 67 (MAASPKIGIG…SSDSLRLRVS (67 aa)) directs the protein to the chloroplast. Positions 54–78 (TRTRSSDSLRLRVSATANSPSSSSS) are disordered. Low complexity predominate over residues 64 to 78 (LRVSATANSPSSSSS). FAD-binding positions include 91–94 (SGPA), 113–120 (EGYQMGGV), Asn133, Val166, and Cys220. Cys217 and Cys220 are joined by a disulfide. Positions 240, 265, 324, and 344 each coordinate NADP(+). Residues Asp364 and 371–374 (RQAV) each bind FAD. Arg371 provides a ligand contact to NADP(+). The 127-residue stretch at 403–529 (PQTEEAKKEF…EYREFIEANK (127 aa)) folds into the Thioredoxin domain. Catalysis depends on nucleophile residues Cys454 and Cys457. Cysteines 454 and 457 form a disulfide.

It belongs to the class-II pyridine nucleotide-disulfide oxidoreductase family. In terms of assembly, may homodimerize. Interacts with the 2-Cys peroxiredoxin BAS1. The cofactor is FAD.

Its subcellular location is the plastid. It localises to the chloroplast. The enzyme catalyses [thioredoxin]-dithiol + NADP(+) = [thioredoxin]-disulfide + NADPH + H(+). Thioredoxin reductase (TR) that exhibits both TR and thioredoxin (Trx) activities. Contains a C-terminal functional Trx domain. Functions as an electron donor for plastidial 2-Cys peroxiredoxins and participates in a NADPH-dependent hydrogen peroxide scavenging system in chloroplasts in the dark. Required for chlorophyll biosynthesis and biogenesis of the photosynthetic apparatus. Activates aerobic cyclase which converts Mg-protoporhyrin monomethyl ester into protochlorophyllide. Involved in a light-dependent regulation of starch biosynthesis by redox activation of the ADP-glucose pyrophosphorylase (AGPase), a central enzyme of starch synthesis. In Arabidopsis thaliana (Mouse-ear cress), this protein is NADPH-dependent thioredoxin reductase 3.